The sequence spans 2188 residues: Tiggrin (2188 aa).

The signal sequence occupies residues Met-1–Gly-18. Coiled coils occupy residues Ser-570–Lys-635, Leu-1009–Ser-1050, Thr-1312–Glu-1343, and Lys-1613–His-1641. Residues Ile-1984–Gly-2188 form a disordered region. Residues Phe-1985–Asp-1998 show a composition bias toward basic and acidic residues. The Cell attachment site motif lies at Arg-1989 to Asp-1991. Acidic residues predominate over residues Ser-2000–Leu-2009. The segment covering Pro-2016–Pro-2033 has biased composition (pro residues). Composition is skewed to low complexity over residues Gly-2057 to Ser-2077 and Gln-2091 to Gln-2101. Positions Gly-2115–Gln-2139 are enriched in polar residues. Positions Gln-2148–Gln-2165 are enriched in low complexity. Residues Phe-2179–Gly-2188 show a composition bias toward basic and acidic residues.

Post-translationally, O-glycosylation by pgant3 is required for proper secretion and localization to the basal cell layer interface during wing development. In embryos, expressed in the apodemes (muscle attachment sites) of the major longitudinal muscles 4, 6, 7, 12 and 13 and the wide dorsal oblique muscles 9 and 10, in hemocytes, in fat body cells, in basement membranes surrounding the gut and in the commissures of the ventral nerve cord. Expressed in larval imaginal wing disk and in pupal wing. In adult flies, expressed in the jump muscle (at protein level).

It is found in the secreted. The protein resides in the extracellular space. It localises to the extracellular matrix. Its function is as follows. Functions as a ligand for integrin alpha-PS2/beta-PS. Required in larvae for proper muscle structure and function. Involved in the regulation of cell adhesion during wing development. The polypeptide is Tiggrin (Drosophila melanogaster (Fruit fly)).